The sequence spans 461 residues: Argininosuccinate lyase (461 aa).

It belongs to the lyase 1 family. Argininosuccinate lyase subfamily.

Its subcellular location is the cytoplasm. It carries out the reaction 2-(N(omega)-L-arginino)succinate = fumarate + L-arginine. It participates in amino-acid biosynthesis; L-arginine biosynthesis; L-arginine from L-ornithine and carbamoyl phosphate: step 3/3. In Symbiobacterium thermophilum (strain DSM 24528 / JCM 14929 / IAM 14863 / T), this protein is Argininosuccinate lyase.